The sequence spans 86 residues: Defensin-like protein a (86 aa).

The first 23 residues, 1–23 (MRCSVLFVVSYVIMSLLISHVQG), serve as a signal peptide directing secretion. Cystine bridges form between Cys-33–Cys-81, Cys-43–Cys-67, Cys-51–Cys-76, and Cys-65–Cys-78.

It belongs to the DEFL family. In terms of tissue distribution, expressed specifically in anthers.

It is found in the secreted. Functionally, involved in self-incompatibility. The chain is Defensin-like protein a (SCRa) from Arabidopsis lyrata (Lyre-leaved rock-cress).